The chain runs to 261 residues: uncharacterized protein (261 aa).

Transmembrane regions (helical) follow at residues 15–35 (WYSV…IIVC), 87–107 (VYLI…IRNA), and 131–151 (LLLY…YFLI). A compositionally biased stretch (basic and acidic residues) spans 234-246 (LEEKKAKRRQNAE). The segment at 234 to 261 (LEEKKAKRRQNAERRKKRREIAMEQREQ) is disordered.

The protein localises to the membrane. This is an uncharacterized protein from Caenorhabditis elegans.